A 146-amino-acid chain; its full sequence is Transcription initiation factor TFIID subunit 10b (146 aa).

The disordered stretch occupies residues 16-43 (GASSHGQSSGGGGGGDRDRTTPSSHLSD).

This sequence belongs to the TAF10 family. Belongs to the TFIID complex which is composed of TATA binding protein (Tbp) and a number of TBP-associated factors (TAFs). The N-terminus interacts with the histone fold of Taf8. In terms of tissue distribution, at embryonic stage 9, expression is seen in the mesodermal layer and midgut primordia. The mesoderm-specific expression persists in later stages of development and at its highest level is detected in midgut, hindgut, and differentiating somatic muscle fibers. Coexpressed with Taf10 in the lateral epidermis and anal plate.

The protein resides in the cytoplasm. Its subcellular location is the nucleus. In terms of biological role, TFIID is a multimeric protein complex that plays a central role in mediating promoter responses to various activators and repressors. This Drosophila melanogaster (Fruit fly) protein is Transcription initiation factor TFIID subunit 10b.